A 307-amino-acid polypeptide reads, in one-letter code: Methionyl-tRNA formyltransferase (307 aa).

109-112 (SMLP) is a binding site for (6S)-5,6,7,8-tetrahydrofolate.

This sequence belongs to the Fmt family.

The enzyme catalyses L-methionyl-tRNA(fMet) + (6R)-10-formyltetrahydrofolate = N-formyl-L-methionyl-tRNA(fMet) + (6S)-5,6,7,8-tetrahydrofolate + H(+). Its function is as follows. Attaches a formyl group to the free amino group of methionyl-tRNA(fMet). The formyl group appears to play a dual role in the initiator identity of N-formylmethionyl-tRNA by promoting its recognition by IF2 and preventing the misappropriation of this tRNA by the elongation apparatus. This is Methionyl-tRNA formyltransferase from Orientia tsutsugamushi (strain Boryong) (Rickettsia tsutsugamushi).